The sequence spans 132 residues: Small ribosomal subunit protein uS8 (132 aa).

The protein belongs to the universal ribosomal protein uS8 family. As to quaternary structure, part of the 30S ribosomal subunit. Contacts proteins S5 and S12.

One of the primary rRNA binding proteins, it binds directly to 16S rRNA central domain where it helps coordinate assembly of the platform of the 30S subunit. This chain is Small ribosomal subunit protein uS8, found in Exiguobacterium sibiricum (strain DSM 17290 / CCUG 55495 / CIP 109462 / JCM 13490 / 255-15).